We begin with the raw amino-acid sequence, 216 residues long: MARIIDLVPWDDGSTHVYASPAILLPMERQRNQLAGVKQQLYHPALPTLRHMDRDTVKACLPDEHCQSTTYCRKDEFDNAHFTLLGVPNKPLQCLDITATGQKLRNRYHEGKLAPIAPGINRVDWPCFTRAIEDWSHFVSSAGEFKLPCLRKRAEGLSGYAVRYLKPDVTQTWRYCLSQNPSLDRYGQKPLPFDSLNTFRSFGSSYSRVNYLTPWH.

As to quaternary structure, microtubule inner protein component of sperm flagellar doublet microtubules. In terms of tissue distribution, expressed in testis, prostate and placenta.

Its subcellular location is the cytoplasm. The protein localises to the cytoskeleton. It is found in the flagellum axoneme. Its function is as follows. Microtubule inner protein (MIP) part of the dynein-decorated doublet microtubules (DMTs) in flagellum axoneme. May serve to reinforce and thus stabilize the microtubule structure in the sperm flagella. The sequence is that of Sperm microtubule inner protein 8 from Homo sapiens (Human).